The following is a 492-amino-acid chain: Probable malate:quinone oxidoreductase 1 (492 aa).

It belongs to the MQO family. The cofactor is FAD.

It carries out the reaction (S)-malate + a quinone = a quinol + oxaloacetate. It participates in carbohydrate metabolism; tricarboxylic acid cycle; oxaloacetate from (S)-malate (quinone route): step 1/1. The chain is Probable malate:quinone oxidoreductase 1 from Staphylococcus epidermidis (strain ATCC 35984 / DSM 28319 / BCRC 17069 / CCUG 31568 / BM 3577 / RP62A).